The following is a 688-amino-acid chain: Glycine--tRNA ligase beta subunit (688 aa).

This sequence belongs to the class-II aminoacyl-tRNA synthetase family. As to quaternary structure, tetramer of two alpha and two beta subunits.

It is found in the cytoplasm. It catalyses the reaction tRNA(Gly) + glycine + ATP = glycyl-tRNA(Gly) + AMP + diphosphate. This Haemophilus influenzae (strain PittEE) protein is Glycine--tRNA ligase beta subunit.